Here is an 83-residue protein sequence, read N- to C-terminus: Cytochrome b559 subunit alpha (83 aa).

The helical transmembrane segment at 21–35 (VIHSITIPSLFIAGW) threads the bilayer. His23 lines the heme pocket.

The protein belongs to the PsbE/PsbF family. In terms of assembly, heterodimer of an alpha subunit and a beta subunit. PSII is composed of 1 copy each of membrane proteins PsbA, PsbB, PsbC, PsbD, PsbE, PsbF, PsbH, PsbI, PsbJ, PsbK, PsbL, PsbM, PsbT, PsbX, PsbY, PsbZ, Psb30/Ycf12, at least 3 peripheral proteins of the oxygen-evolving complex and a large number of cofactors. It forms dimeric complexes. It depends on heme b as a cofactor.

It is found in the plastid. The protein resides in the chloroplast thylakoid membrane. Its function is as follows. This b-type cytochrome is tightly associated with the reaction center of photosystem II (PSII). PSII is a light-driven water:plastoquinone oxidoreductase that uses light energy to abstract electrons from H(2)O, generating O(2) and a proton gradient subsequently used for ATP formation. It consists of a core antenna complex that captures photons, and an electron transfer chain that converts photonic excitation into a charge separation. The protein is Cytochrome b559 subunit alpha of Adiantum capillus-veneris (Maidenhair fern).